Consider the following 569-residue polypeptide: Probable diguanylate cyclase DgcQ (569 aa).

The next 2 helical transmembrane spans lie at 25–45 (LGPG…STLL) and 365–385 (IALT…WYVI). Residues 433 to 568 (HPFSVIQVDL…GRNRVCASDN (136 aa)) enclose the GGDEF domain. Asp-441 is a Mg(2+) binding site. Residues Asn-449, His-454, and Asp-458 each coordinate substrate. Position 484 (Glu-484) interacts with Mg(2+). Glu-484 serves as the catalytic Proton acceptor.

As to quaternary structure, homodimer. Mg(2+) serves as cofactor.

The protein localises to the cell inner membrane. The enzyme catalyses 2 GTP = 3',3'-c-di-GMP + 2 diphosphate. The protein operates within glycan metabolism; bacterial cellulose biosynthesis. Its pathway is purine metabolism; 3',5'-cyclic di-GMP biosynthesis. Its function is as follows. Catalyzes the synthesis of cyclic-di-GMP (c-di-GMP) via the condensation of 2 GTP molecules. Cyclic-di-GMP is a second messenger which controls cell surface-associated traits in bacteria. Involved in the regulation of cellulose production. This Shigella sonnei (strain Ss046) protein is Probable diguanylate cyclase DgcQ.